The following is a 276-amino-acid chain: Odontogenic ameloblast-associated protein (276 aa).

A signal peptide spans 1–15 (MRTLILLGILGATMS). 3 O-linked (GalNAc...) threonine glycosylation sites follow: threonine 101, threonine 113, and threonine 117. An interaction with ARHGEF5 region spans residues 125 to 127 (MPS). A glycan (O-linked (GalNAc...) serine) is linked at serine 246. Threonine 247, threonine 248, and threonine 252 each carry an O-linked (GalNAc...) threonine glycan. A glycan (O-linked (GalNAc...) serine) is linked at serine 253. 4 O-linked (GalNAc...) threonine glycosylation sites follow: threonine 254, threonine 258, threonine 260, and threonine 270. Serine 272 carries an O-linked (GalNAc...) serine glycan.

This sequence belongs to the ODAM family. Interacts (via C-terminus) with ARHGEF5. O-glycosylated.

The protein resides in the secreted. Its subcellular location is the cytoplasm. It localises to the nucleus. Tooth-associated epithelia protein that probably plays a role in odontogenesis, the complex process that results in the initiation and generation of the tooth. May be incorporated in the enamel matrix at the end of mineralization process. Involved in the induction of RHOA activity via interaction with ARHGEF and expression of downstream factors such as ROCK. Plays a role in attachment of the junctional epithelium to the tooth surface. This chain is Odontogenic ameloblast-associated protein (ODAM), found in Sus scrofa (Pig).